The following is a 278-amino-acid chain: Coiled-coil domain-containing protein 121 (278 aa).

2 coiled-coil regions span residues 1-30 and 105-243; these read MTDL…REKL and QAMR…LIQA. The disordered stretch occupies residues 253–278; that stretch reads QCLNRQDVPKTTPSLPQGTKSRINPK.

This is Coiled-coil domain-containing protein 121 (CCDC121) from Homo sapiens (Human).